The sequence spans 330 residues: ATP-dependent Clp protease proteolytic subunit-related protein 3, chloroplastic (330 aa).

Residues 1-43 (MASCLQASMNSLLPRSSSFSPHPPLSSNSSGRRNLKTFRYAFR) constitute a chloroplast transit peptide. The segment at 7–32 (ASMNSLLPRSSSFSPHPPLSSNSSGR) is disordered. Over residues 8-30 (SMNSLLPRSSSFSPHPPLSSNSS) the composition is skewed to low complexity.

Belongs to the peptidase S14 family. As to quaternary structure, component of the chloroplastic Clp protease core complex which consist of at least 16 proteins: CLPP4 (3 copies), CLPP5 (3 copies), CLPR4 (2 copies), ClpP1 (1 copy), CLPP6 (1 copy), CLPR2 (1 copy), CLPT1 (1 copy), CLPT2 (1 copy) and 3 copies of CLPP3 and/or CLPR1 and/or CLPR3. The core complex is organized in two heptameric rings, one containing CLPP3,4,5,6 in a 1:2:3:1 ratio and the other CLPP1 and CLPR1,2,3,4 in a 3:1:1:1:1 ratio.

It localises to the plastid. The protein localises to the chloroplast. This Arabidopsis thaliana (Mouse-ear cress) protein is ATP-dependent Clp protease proteolytic subunit-related protein 3, chloroplastic.